Here is a 222-residue protein sequence, read N- to C-terminus: 7-cyano-7-deazaguanine synthase (222 aa).

14 to 24 (FSGGQDSTTCL) contacts ATP. Residues C190, C199, C202, and C205 each coordinate Zn(2+).

This sequence belongs to the QueC family. As to quaternary structure, homodimer. The cofactor is Zn(2+).

It catalyses the reaction 7-carboxy-7-deazaguanine + NH4(+) + ATP = 7-cyano-7-deazaguanine + ADP + phosphate + H2O + H(+). Its pathway is purine metabolism; 7-cyano-7-deazaguanine biosynthesis. In terms of biological role, catalyzes the ATP-dependent conversion of 7-carboxy-7-deazaguanine (CDG) to 7-cyano-7-deazaguanine (preQ(0)). This is 7-cyano-7-deazaguanine synthase from Staphylococcus aureus (strain Mu3 / ATCC 700698).